The sequence spans 87 residues: MANHKSALKRHKQSLKRAARNRAVRTRIKNVIKDVRIALQQQDKEQAATALVQASAVLDKAASKGVVHWKTAARKISRLTKAVNQVA.

The segment at 1-22 is disordered; sequence MANHKSALKRHKQSLKRAARNR.

Belongs to the bacterial ribosomal protein bS20 family.

In terms of biological role, binds directly to 16S ribosomal RNA. This Nitratidesulfovibrio vulgaris (strain DP4) (Desulfovibrio vulgaris) protein is Small ribosomal subunit protein bS20.